Here is a 279-residue protein sequence, read N- to C-terminus: Toxin TxP-I (279 aa).

The signal sequence occupies residues 1 to 14 (MNLFFLFIIPTILA). The propeptide occupies 15–27 (VKPFRSFNNISLI).

In terms of processing, contains several disulfide bonds. As to expression, posterior glands which appear to be connected with the stylet through a series of ducts.

It localises to the secreted. Functionally, part of a complex mixture of neurotoxins which P.tritici utilizes to capture prey. It has contracting-paralyzing activity in insects. This Pyemotes tritici (Straw itch mite) protein is Toxin TxP-I.